We begin with the raw amino-acid sequence, 425 residues long: Serine--tRNA ligase (425 aa).

A disordered region spans residues 41-70 (TERSQLQARSNQVGKQVGEKIKSGSDPKGT). The segment covering 44-54 (SQLQARSNQVG) has biased composition (polar residues). Residues 57–70 (VGEKIKSGSDPKGT) show a composition bias toward basic and acidic residues. L-serine is bound at residue 234 to 236 (TSE). Position 265 to 267 (265 to 267 (RRE)) interacts with ATP. Glu288 contributes to the L-serine binding site. 352 to 355 (EISS) contacts ATP. Ser388 serves as a coordination point for L-serine.

Belongs to the class-II aminoacyl-tRNA synthetase family. Type-1 seryl-tRNA synthetase subfamily. As to quaternary structure, homodimer. The tRNA molecule binds across the dimer.

Its subcellular location is the cytoplasm. It carries out the reaction tRNA(Ser) + L-serine + ATP = L-seryl-tRNA(Ser) + AMP + diphosphate + H(+). The enzyme catalyses tRNA(Sec) + L-serine + ATP = L-seryl-tRNA(Sec) + AMP + diphosphate + H(+). The protein operates within aminoacyl-tRNA biosynthesis; selenocysteinyl-tRNA(Sec) biosynthesis; L-seryl-tRNA(Sec) from L-serine and tRNA(Sec): step 1/1. In terms of biological role, catalyzes the attachment of serine to tRNA(Ser). Is also able to aminoacylate tRNA(Sec) with serine, to form the misacylated tRNA L-seryl-tRNA(Sec), which will be further converted into selenocysteinyl-tRNA(Sec). The protein is Serine--tRNA ligase of Trichodesmium erythraeum (strain IMS101).